Consider the following 303-residue polypeptide: MNPALPRHIAVLKGGPSEEREISLRTAKAVEDALSSLGYEISSIDVTTEKFEIPRDAEICFLCIHGSFGEDGQIQRLLMRRGIPFTGSDASSSEKAFDKAWSKTLFIKGGIPTPPFCVVGDGKKIPFDPPYVIKPSRQGSSIGIEFVYDIKELDQAIKKSTQYDHVVLAEALITGKELTVGILDGKALPVVEIKPKEGFYDYHHKYTKGASTYFCPAPLTVDQTSAVQKTALDAFNVLGCSVYGRVDIILSDNGIPWVLEINTIPGMTETSLFPMAAKASGMNFAQLCEKILEISYLRWKAHG.

Residues 103-293 form the ATP-grasp domain; that stretch reads KTLFIKGGIP…FAQLCEKILE (191 aa). 130–179 contacts ATP; sequence PYVIKPSRQGSSIGIEFVYDIKELDQAIKKSTQYDHVVLAEALITGKELT. Mg(2+)-binding residues include D247, E260, and N262.

It belongs to the D-alanine--D-alanine ligase family. Requires Mg(2+) as cofactor. It depends on Mn(2+) as a cofactor.

It is found in the cytoplasm. The catalysed reaction is 2 D-alanine + ATP = D-alanyl-D-alanine + ADP + phosphate + H(+). It participates in cell wall biogenesis; peptidoglycan biosynthesis. Cell wall formation. This Methylacidiphilum infernorum (isolate V4) (Methylokorus infernorum (strain V4)) protein is D-alanine--D-alanine ligase.